We begin with the raw amino-acid sequence, 282 residues long: Probable endonuclease 4 (282 aa).

Positions 69, 109, 145, 179, 182, 216, 229, 231, and 261 each coordinate Zn(2+).

This sequence belongs to the AP endonuclease 2 family. It depends on Zn(2+) as a cofactor.

It carries out the reaction Endonucleolytic cleavage to 5'-phosphooligonucleotide end-products.. Its function is as follows. Endonuclease IV plays a role in DNA repair. It cleaves phosphodiester bonds at apurinic or apyrimidinic (AP) sites, generating a 3'-hydroxyl group and a 5'-terminal sugar phosphate. This is Probable endonuclease 4 from Magnetococcus marinus (strain ATCC BAA-1437 / JCM 17883 / MC-1).